Reading from the N-terminus, the 196-residue chain is Holliday junction branch migration complex subunit RuvA (196 aa).

Positions 1-63 (MIASVRGEVL…EDSMTLYGFP (63 aa)) are domain I. Residues 64-138 (DGETRDLFLT…DKVGVAATGG (75 aa)) form a domain II region. Residues 138 to 142 (GALST) form a flexible linker region. Residues 143-196 (NGHAVRSPVVEALVGLGFAAKQAEEATDTVLAANHDATTSSALRSALSLLGKAR) form a domain III region.

This sequence belongs to the RuvA family. In terms of assembly, homotetramer. Forms an RuvA(8)-RuvB(12)-Holliday junction (HJ) complex. HJ DNA is sandwiched between 2 RuvA tetramers; dsDNA enters through RuvA and exits via RuvB. An RuvB hexamer assembles on each DNA strand where it exits the tetramer. Each RuvB hexamer is contacted by two RuvA subunits (via domain III) on 2 adjacent RuvB subunits; this complex drives branch migration. In the full resolvosome a probable DNA-RuvA(4)-RuvB(12)-RuvC(2) complex forms which resolves the HJ.

It localises to the cytoplasm. Its function is as follows. The RuvA-RuvB-RuvC complex processes Holliday junction (HJ) DNA during genetic recombination and DNA repair, while the RuvA-RuvB complex plays an important role in the rescue of blocked DNA replication forks via replication fork reversal (RFR). RuvA specifically binds to HJ cruciform DNA, conferring on it an open structure. The RuvB hexamer acts as an ATP-dependent pump, pulling dsDNA into and through the RuvAB complex. HJ branch migration allows RuvC to scan DNA until it finds its consensus sequence, where it cleaves and resolves the cruciform DNA. This Mycobacterium bovis (strain ATCC BAA-935 / AF2122/97) protein is Holliday junction branch migration complex subunit RuvA.